Consider the following 88-residue polypeptide: Putative septation protein SpoVG (88 aa).

Belongs to the SpoVG family.

Its function is as follows. Could be involved in septation. The polypeptide is Putative septation protein SpoVG (Caldicellulosiruptor saccharolyticus (strain ATCC 43494 / DSM 8903 / Tp8T 6331)).